A 199-amino-acid polypeptide reads, in one-letter code: 3-isopropylmalate dehydratase small subunit (199 aa).

The protein belongs to the LeuD family. LeuD type 1 subfamily. Heterodimer of LeuC and LeuD.

It catalyses the reaction (2R,3S)-3-isopropylmalate = (2S)-2-isopropylmalate. It participates in amino-acid biosynthesis; L-leucine biosynthesis; L-leucine from 3-methyl-2-oxobutanoate: step 2/4. In terms of biological role, catalyzes the isomerization between 2-isopropylmalate and 3-isopropylmalate, via the formation of 2-isopropylmaleate. The chain is 3-isopropylmalate dehydratase small subunit from Pseudoalteromonas translucida (strain TAC 125).